The primary structure comprises 161 residues: Regulator of ribonuclease activity A (161 aa).

This sequence belongs to the RraA family. In terms of assembly, homotrimer. Binds to both RNA-binding sites in the C-terminal region of Rne and to RhlB.

The protein localises to the cytoplasm. Globally modulates RNA abundance by binding to RNase E (Rne) and regulating its endonucleolytic activity. Can modulate Rne action in a substrate-dependent manner by altering the composition of the degradosome. Modulates RNA-binding and helicase activities of the degradosome. This chain is Regulator of ribonuclease activity A, found in Serratia proteamaculans (strain 568).